The chain runs to 270 residues: Tryptophan synthase alpha chain (270 aa).

Catalysis depends on proton acceptor residues Glu-49 and Asp-60.

The protein belongs to the TrpA family. Tetramer of two alpha and two beta chains.

The catalysed reaction is (1S,2R)-1-C-(indol-3-yl)glycerol 3-phosphate + L-serine = D-glyceraldehyde 3-phosphate + L-tryptophan + H2O. The protein operates within amino-acid biosynthesis; L-tryptophan biosynthesis; L-tryptophan from chorismate: step 5/5. Its function is as follows. The alpha subunit is responsible for the aldol cleavage of indoleglycerol phosphate to indole and glyceraldehyde 3-phosphate. The sequence is that of Tryptophan synthase alpha chain from Gluconobacter oxydans (strain 621H) (Gluconobacter suboxydans).